The chain runs to 79 residues: Three-finger toxin A2 (79 aa).

An N-terminal signal peptide occupies residues 1-21 (MKTLLLTLVVVTIVCLDLGNS). Disulfide bonds link Cys24/Cys41, Cys34/Cys59, Cys63/Cys71, and Cys72/Cys77.

It belongs to the three-finger toxin family. Short-chain subfamily. In terms of tissue distribution, expressed by the venom gland.

It is found in the secreted. The polypeptide is Three-finger toxin A2 (Micrurus laticollaris (Balsas coral snake)).